A 393-amino-acid polypeptide reads, in one-letter code: Large ribosomal subunit protein uL2m (393 aa).

Residues 1–43 (MLVLGSLRSALSCSSTASLISKRNPCYPYGILCRTLSQSVKLW) constitute a mitochondrion transit peptide. Residues 337 to 393 (AMNKCDHPHGGGRGKSKSNKLSMSPWGQLAKGYKTRRGKNQNRMKVKDRPRGKDARL) form a disordered region. Positions 369–380 (YKTRRGKNQNRM) are enriched in basic residues. Positions 381–393 (KVKDRPRGKDARL) are enriched in basic and acidic residues.

This sequence belongs to the universal ribosomal protein uL2 family. In terms of assembly, component of the mitochondrial large ribosomal subunit (mt-LSU). Mature yeast 74S mitochondrial ribosomes consist of a small (37S) and a large (54S) subunit. The 37S small subunit contains a 15S ribosomal RNA (15S mt-rRNA) and 34 different proteins. The 54S large subunit contains a 21S rRNA (21S mt-rRNA) and 46 different proteins. uL2m has a Na/K ligand binding site.

The protein localises to the mitochondrion. Its function is as follows. Component of the mitochondrial ribosome (mitoribosome), a dedicated translation machinery responsible for the synthesis of mitochondrial genome-encoded proteins, including at least some of the essential transmembrane subunits of the mitochondrial respiratory chain. The mitoribosomes are attached to the mitochondrial inner membrane and translation products are cotranslationally integrated into the membrane. The protein is Large ribosomal subunit protein uL2m (RML2) of Saccharomyces cerevisiae (strain ATCC 204508 / S288c) (Baker's yeast).